The following is a 122-amino-acid chain: Large ribosomal subunit protein uL14 (122 aa).

The protein belongs to the universal ribosomal protein uL14 family. In terms of assembly, part of the 50S ribosomal subunit. Forms a cluster with proteins L3 and L19. In the 70S ribosome, L14 and L19 interact and together make contacts with the 16S rRNA in bridges B5 and B8.

In terms of biological role, binds to 23S rRNA. Forms part of two intersubunit bridges in the 70S ribosome. The polypeptide is Large ribosomal subunit protein uL14 (Geobacillus kaustophilus (strain HTA426)).